The sequence spans 579 residues: MSGRRRNHPGRLASIPGLRTRTGSRNQHPGIANYPADSSDFRPAQQRRALEQREQQAGQLDPARRSPSMPSANRYLPPLGQQQSEPQHNSAPPCGPYPGERIKVTRAAAQRSREMGYRMYWMVQRAATADGADKSGLTALTWPVVTNFAVDSAMAVALANTLFFAAASGESKSKVALYLLITIAPFAVIAPLIGPALDRLQHGRRVALATSFVLRTGLATLLIMNYDGATGSYPSMVLYPCALAMMVLSKSFSVLRSAVTPRVMPPSIDLVRVNSRLTVFGLLGGTIAGGAIAAGVEFVCAHLFKLPGALFVVAAITISGALLSMRIPRWVEVTAGEIPATLSYRLHRKPLRQSWPEEVKKVSGRLRQPLGRNIITSLWGNCTIKVMVGFLFLYPAFVAKEHQANGWVQLGMLGLIGTAAAIGNFAGNFTSARLQLGRPAVLVVRCTIAVTVLALAASVAGNLLMTTIATLITSGSSAIAKASLDASLQNDLPEESRASGFGRSESTLQLAWVLGGALGVMVYTDLWVGFTAVSALLILGLAQTVVSFRGDSLIPGLGGNRPVMIEQESMRRAAAVSPQ.

The disordered stretch occupies residues 1–100 (MSGRRRNHPG…APPCGPYPGE (100 aa)). Residues 80–90 (GQQQSEPQHNS) show a composition bias toward polar residues. A run of 11 helical transmembrane segments spans residues 148–168 (FAVD…AAAS), 175–195 (VALY…LIGP), 206–226 (VALA…IMNY), 228–248 (GATG…MMVL), 279–299 (VFGL…VEFV), 303–323 (LFKL…GALL), 378–398 (LWGN…PAFV), 407–427 (WVQL…NFAG), 448–468 (IAVT…MTTI), 504–524 (SEST…MVYT), and 526–546 (LWVG…QTVV).

This sequence to M.tuberculosis Rv0876c.

The protein resides in the cell membrane. This is an uncharacterized protein from Mycobacterium leprae (strain TN).